We begin with the raw amino-acid sequence, 205 residues long: Protein TGAM_1450 (205 aa).

Residues 7-201 form the AMMECR1 domain; that stretch reads EWGEFLVRLA…EEYPRGPVRR (195 aa).

In Thermococcus gammatolerans (strain DSM 15229 / JCM 11827 / EJ3), this protein is Protein TGAM_1450.